A 219-amino-acid polypeptide reads, in one-letter code: Chalcone--flavanone isomerase (219 aa).

The substrate site is built by T50, N115, and S188.

This sequence belongs to the chalcone isomerase family.

It catalyses the reaction a chalcone = a flavanone.. Its pathway is secondary metabolite biosynthesis; flavonoid biosynthesis. Its function is as follows. Catalyzes the intramolecular cyclization of bicyclic chalcones into tricyclic (S)-flavanones. Responsible for the isomerization of 4,2',4',6'-tetrahydroxychalcone (also termed chalcone) into naringenin. This chain is Chalcone--flavanone isomerase (CHI), found in Clitoria ternatea (Butterfly pea).